The following is a 167-amino-acid chain: Photosystem I assembly protein Ycf3 (167 aa).

3 TPR repeats span residues 35–68 (AFTYYREGMSAQSEGEYAEALQNYYEAMRLEVDA), 72–105 (SYIFYNIGLIHTSNGEHARALEYYYQALERNPSL), and 120–153 (GEQAIENGQAEISKMLFDKAADYWKEAIRLAPTN).

The protein belongs to the Ycf3 family.

Its subcellular location is the plastid. The protein resides in the chloroplast thylakoid membrane. Essential for the assembly of the photosystem I (PSI) complex. May act as a chaperone-like factor to guide the assembly of the PSI subunits. The protein is Photosystem I assembly protein Ycf3 of Pleurastrum terricola (Filamentous green alga).